The chain runs to 288 residues: Transposase for insertion sequence element IS1106 (288 aa).

It belongs to the transposase 11 family.

Its function is as follows. Involved in the transposition of the insertion sequence. This chain is Transposase for insertion sequence element IS1106, found in Neisseria meningitidis serogroup B.